Consider the following 625-residue polypeptide: Prothrombin (625 aa).

The signal sequence occupies residues 1 to 24; the sequence is MARVRGPRLPGCLALAALFSLVHS. Residues 25-43 constitute a propeptide that is removed on maturation; sequence QHVFLAHQQASSLLQRARR. Residues 44–90 enclose the Gla domain; the sequence is ANKGFLEEVRKGNLERECLEEPCSREEAFEALESLSATDAFWAKYTA. 10 positions are modified to 4-carboxyglutamate: glutamate 50, glutamate 51, glutamate 58, glutamate 60, glutamate 63, glutamate 64, glutamate 69, glutamate 70, glutamate 73, and glutamate 76. Cysteines 61 and 66 form a disulfide. 11 cysteine pairs are disulfide-bonded: cysteine 91–cysteine 104, cysteine 109–cysteine 187, cysteine 130–cysteine 170, cysteine 158–cysteine 182, cysteine 214–cysteine 292, cysteine 235–cysteine 275, cysteine 263–cysteine 287, cysteine 339–cysteine 485, cysteine 394–cysteine 410, cysteine 539–cysteine 553, and cysteine 567–cysteine 597. Kringle domains follow at residues 109–187 and 214–292; these read CAEG…VPVC and CVPD…LNYC. 2 N-linked (GlcNAc...) asparagine glycosylation sites follow: asparagine 120 and asparagine 144. One can recognise a Peptidase S1 domain in the interval 367 to 621; the sequence is IVEGQDAEVG…LKKWIQKVID (255 aa). Residue histidine 409 is the Charge relay system of the active site. Asparagine 419 carries N-linked (GlcNAc...) asparagine glycosylation. Catalysis depends on aspartate 465, which acts as the Charge relay system. The tract at residues 554-576 is high affinity receptor-binding region which is also known as the TP508 peptide; it reads AGYKPGEGKRGDACEGDSGGPFV. Serine 571 (charge relay system) is an active-site residue.

Belongs to the peptidase S1 family. Heterodimer (named alpha-thrombin) of a light and a heavy chain; disulfide-linked. Forms a heterodimer with SERPINA5. In plasma, interacts (via N-terminus) with alpha-1-microglobulin; this interaction does not prevent the activation of prothrombin to thrombin. In terms of processing, the gamma-carboxyglutamyl residues, which bind calcium ions, result from the carboxylation of glutamyl residues by a microsomal enzyme, the vitamin K-dependent carboxylase. The modified residues are necessary for the calcium-dependent interaction with a negatively charged phospholipid surface, which is essential for the conversion of prothrombin to thrombin. In the penultimate step of the coagulation cascade, prothrombin is converted to thrombin by the prothrombinase complex composed of factor Xa (F10), cofactor Va (F5), and phospholipids. This activation requires factor Xa-catalyzed sequential cleavage at 2 sites, Arg-317 and Arg-366, along 2 possible pathways. In the first pathway, the first cleavage occurs at Arg-317, leading to the formation of the inactive intermediate prethrombin-2. This pathway preferentially occurs on platelets and in the absence of cofactor Va. In the second pathway, the first cleavage occurs at Arg-366, which separates protease domain into 2 chains that remain connected through a disulfide bond and generates the active intermediate meizothrombin. The presence of cofactor Va directs activation along the meizothrombin pathway and greatly accelerates the rate of cleavage at Arg-366, but has a smaller effect on the cleavage of meizothrombin at Arg-317. Meizothrombin accumulates as an intermediate when prothrombinase is assembled on the membrane of red blood cells. Expressed by the liver and secreted in plasma.

It localises to the secreted. The protein resides in the extracellular space. The catalysed reaction is Selective cleavage of Arg-|-Gly bonds in fibrinogen to form fibrin and release fibrinopeptides A and B.. With respect to regulation, activity is promoted in the presence of negatively charged surfaces, such as polyphosphate and dextran sulfate. Inhibited by SERPINA5. Functionally, thrombin, which cleaves bonds after Arg and Lys, converts fibrinogen to fibrin and activates factors V, VII, VIII, XIII, and, in complex with thrombomodulin, protein C. Functions in blood homeostasis, inflammation and wound healing. Activates coagulation factor XI (F11); activation is promoted by the contact with negatively charged surfaces. Triggers the production of pro-inflammatory cytokines, such as MCP-1/CCL2 and IL8/CXCL8, in endothelial cells. The sequence is that of Prothrombin (F2) from Bos taurus (Bovine).